A 319-amino-acid polypeptide reads, in one-letter code: D-alanine--D-alanine ligase (319 aa).

Positions 120–315 constitute an ATP-grasp domain; it reads KRVLAQAGVP…YPELLRRLVE (196 aa). ATP is bound at residue 147–198; that stretch reads DPPFFVKPANTGSSVGISRVERFQDLEAALALAFRYDEKAVVEKALSPVREL. Positions 270, 282, and 284 each coordinate Mg(2+).

This sequence belongs to the D-alanine--D-alanine ligase family. Mg(2+) is required as a cofactor. Mn(2+) serves as cofactor.

The protein resides in the cytoplasm. It carries out the reaction 2 D-alanine + ATP = D-alanyl-D-alanine + ADP + phosphate + H(+). Its pathway is cell wall biogenesis; peptidoglycan biosynthesis. Cell wall formation. The sequence is that of D-alanine--D-alanine ligase from Thermus thermophilus (strain ATCC 27634 / DSM 579 / HB8).